We begin with the raw amino-acid sequence, 520 residues long: Macrophage receptor MARCO (520 aa).

Residues Met1–Asn43 lie on the Cytoplasmic side of the membrane. A helical; Signal-anchor for type II membrane protein membrane pass occupies residues Phe44–Val64. Residues Val65 to Val520 are Extracellular-facing. N-linked (GlcNAc...) asparagine glycans are attached at residues Asn83 and Asn136. Residues Gly142–Ser423 form a disordered region. The 273-residue stretch at Lys147–Glu419 folds into the Collagen-like domain. Low complexity-rich tracts occupy residues Glu203–Glu227, Leu290–Thr345, and Ser380–Asp398. Over residues Val410–Glu419 the composition is skewed to basic and acidic residues. Residues Val424–Ser519 form the SRCR domain. 3 disulfides stabilise this stretch: Cys447/Cys508, Cys460/Cys518, and Cys488/Cys498.

Homotrimer; disulfide-linked. Trimers may assemble in larger oligomers thus resulting in the creation of a large surface capable of interacting with very large ligands. N-glycosylated. As to expression, expressed in alveolar macrophages (at protein level). Detected in macrophages from various tissues including thymus, kidney, Kupffer cells of liver, and spleen.

It localises to the cell membrane. Its function is as follows. Pattern recognition receptor (PRR) which binds Gram-positive and Gram-negative bacteria. Also plays a role in binding of unopsonized particles by alveolar macrophages. Binds to the secretoglobin SCGB3A2. In Homo sapiens (Human), this protein is Macrophage receptor MARCO (MARCO).